The chain runs to 363 residues: Probable endopolygalacturonase B (363 aa).

The signal sequence occupies residues 1 to 20 (MQLLQSSVIAATVGAALVAA). Residues 21-28 (VPVELEAR) constitute a propeptide that is removed on maturation. C31 and C46 are joined by a disulfide. PbH1 repeat units follow at residues 158–187 (SDNL…DVGS), 188–209 (STYI…AINS), 210–230 (GSHI…SIGS), 239–260 (VEDV…RIKT), 268–290 (VSNV…IVEQ), and 302–347 (TNGI…SITG). A glycan (N-linked (GlcNAc...) asparagine) is linked at N162. The Proton donor role is filled by D202. Cysteines 204 and 220 form a disulfide. H224 is a catalytic residue. Cystine bridges form between C330/C335 and C354/C363.

Belongs to the glycosyl hydrolase 28 family.

It localises to the secreted. The catalysed reaction is (1,4-alpha-D-galacturonosyl)n+m + H2O = (1,4-alpha-D-galacturonosyl)n + (1,4-alpha-D-galacturonosyl)m.. Involved in maceration and soft-rotting of plant tissue. Hydrolyzes the 1,4-alpha glycosidic bonds of de-esterified pectate in the smooth region of the plant cell wall. This Aspergillus flavus (strain ATCC 200026 / FGSC A1120 / IAM 13836 / NRRL 3357 / JCM 12722 / SRRC 167) protein is Probable endopolygalacturonase B (pgaB).